A 115-amino-acid polypeptide reads, in one-letter code: Rapid alkalinization factor (115 aa).

The first 23 residues, 1–23, serve as a signal peptide directing secretion; sequence MGVPSGLILCVLIGAFFISMAAA. Residues 24 to 66 constitute a propeptide, removed in mature form; sequence GDSGAYDWVMPARSGGGCKGSIGECIAEEEEFELDSESNRRIL. 2 disulfides stabilise this stretch: Cys-84-Cys-94 and Cys-107-Cys-113.

Post-translationally, proteolytically cleaved, probably by S1P, a subtilisin-like serine protease (subtilase).

It localises to the secreted. In terms of biological role, cell signaling peptide that may regulate plant stress, growth, and development. Mediates a rapid alkalinization of extracellular space by mediating a transient increase in the cytoplasmic Ca(2+) concentration leading to a calcium-dependent signaling events through a cell surface receptor and a concomitant activation of some intracellular mitogen-activated protein kinases. Prevents root growth and seedling development in heterologous system. This chain is Rapid alkalinization factor (RALF), found in Nicotiana tabacum (Common tobacco).